The primary structure comprises 322 residues: Chromoplast-specific carotenoid-associated protein, chromoplastic (322 aa).

The transit peptide at 1–58 (MAFVSQFNQLPCKTLALNPPQPQLTSKPSVFPIASIGATARAAAGKSLISVRPAFKVR) directs the protein to the chromoplast. A disordered region spans residues 67 to 88 (GEDKDEKYGDDSSVAVAEKEEE).

Belongs to the PAP/fibrillin family. As to expression, expressed in corollas. Not detected in fruits, stems, leaves, and roots.

Its subcellular location is the plastid. It is found in the chromoplast. In terms of biological role, may be involved in carotenoid sequestration within chromoplasts. The polypeptide is Chromoplast-specific carotenoid-associated protein, chromoplastic (CHRC) (Cucumis sativus (Cucumber)).